The chain runs to 53 residues: Neuronal protein NP-190 (53 aa).

In terms of tissue distribution, mainly expressed in the fetal brain where it is specifically localized to the proximal axonal segments, cell bodies and growth cones. Lower level of expression was also detected in the fetal heart and the skeletal muscle. No expression in kidney, liver, lung or spleen.

Its subcellular location is the membrane. Functionally, neuronal antigen that may play a role in brain development. May be involved in neurite formation or axonal guidance. This is Neuronal protein NP-190 from Sus scrofa (Pig).